Here is a 375-residue protein sequence, read N- to C-terminus: Succinyl-diaminopimelate desuccinylase (375 aa).

His-66 serves as a coordination point for Zn(2+). Asp-68 is an active-site residue. Residue Asp-99 participates in Zn(2+) binding. Residue Glu-133 is the Proton acceptor of the active site. Glu-134, Glu-162, and His-348 together coordinate Zn(2+).

It belongs to the peptidase M20A family. DapE subfamily. Homodimer. It depends on Zn(2+) as a cofactor. Co(2+) is required as a cofactor.

The catalysed reaction is N-succinyl-(2S,6S)-2,6-diaminopimelate + H2O = (2S,6S)-2,6-diaminopimelate + succinate. Its pathway is amino-acid biosynthesis; L-lysine biosynthesis via DAP pathway; LL-2,6-diaminopimelate from (S)-tetrahydrodipicolinate (succinylase route): step 3/3. Functionally, catalyzes the hydrolysis of N-succinyl-L,L-diaminopimelic acid (SDAP), forming succinate and LL-2,6-diaminopimelate (DAP), an intermediate involved in the bacterial biosynthesis of lysine and meso-diaminopimelic acid, an essential component of bacterial cell walls. In Alkalilimnicola ehrlichii (strain ATCC BAA-1101 / DSM 17681 / MLHE-1), this protein is Succinyl-diaminopimelate desuccinylase.